Consider the following 442-residue polypeptide: ATP-dependent protease ATPase subunit HslU (442 aa).

Residues isoleucine 18, 60–65 (GVGKTE), aspartate 255, glutamate 320, and arginine 392 contribute to the ATP site.

Belongs to the ClpX chaperone family. HslU subfamily. In terms of assembly, a double ring-shaped homohexamer of HslV is capped on each side by a ring-shaped HslU homohexamer. The assembly of the HslU/HslV complex is dependent on binding of ATP.

The protein resides in the cytoplasm. ATPase subunit of a proteasome-like degradation complex; this subunit has chaperone activity. The binding of ATP and its subsequent hydrolysis by HslU are essential for unfolding of protein substrates subsequently hydrolyzed by HslV. HslU recognizes the N-terminal part of its protein substrates and unfolds these before they are guided to HslV for hydrolysis. This chain is ATP-dependent protease ATPase subunit HslU, found in Aeromonas salmonicida (strain A449).